A 432-amino-acid polypeptide reads, in one-letter code: Enolase (432 aa).

Residue Gln-167 coordinates (2R)-2-phosphoglycerate. The active-site Proton donor is Glu-209. Positions 246, 289, and 316 each coordinate Mg(2+). The (2R)-2-phosphoglycerate site is built by Lys-341, Arg-370, Ser-371, and Lys-392. Residue Lys-341 is the Proton acceptor of the active site.

This sequence belongs to the enolase family. It depends on Mg(2+) as a cofactor.

It is found in the cytoplasm. The protein localises to the secreted. The protein resides in the cell surface. The enzyme catalyses (2R)-2-phosphoglycerate = phosphoenolpyruvate + H2O. Its pathway is carbohydrate degradation; glycolysis; pyruvate from D-glyceraldehyde 3-phosphate: step 4/5. Its function is as follows. Catalyzes the reversible conversion of 2-phosphoglycerate (2-PG) into phosphoenolpyruvate (PEP). It is essential for the degradation of carbohydrates via glycolysis. The sequence is that of Enolase from Petrotoga mobilis (strain DSM 10674 / SJ95).